The sequence spans 168 residues: Pheromone-binding protein (168 aa).

A signal peptide spans 1–26 (MNKTTTKMKVAVVAIVVYLAVGNVDS). Disulfide bonds link C45–C80, C76–C134, and C123–C143.

The protein belongs to the PBP/GOBP family. Homodimer. As to expression, antenna.

In terms of biological role, this major soluble protein in olfactory sensilla of male moths might serve to solubilize the extremely hydrophobic pheromone molecules and to transport pheromone through the aqueous lymph to receptors located on olfactory cilia. PBP is also found in sensilla from female M.sexta antennae. In Manduca sexta (Tobacco hawkmoth), this protein is Pheromone-binding protein.